Here is a 320-residue protein sequence, read N- to C-terminus: Cytochrome f (320 aa).

A signal peptide spans 1 to 35 (MQTRNTFSWIREEITRSISVSLMIYIITWASISSA). Residues Y36, C56, C59, and H60 each contribute to the heme site. A helical membrane pass occupies residues 286 to 306 (VQGLLFFLGSVVLAQIFLVLK).

The protein belongs to the cytochrome f family. As to quaternary structure, the 4 large subunits of the cytochrome b6-f complex are cytochrome b6, subunit IV (17 kDa polypeptide, petD), cytochrome f and the Rieske protein, while the 4 small subunits are PetG, PetL, PetM and PetN. The complex functions as a dimer. Requires heme as cofactor.

It is found in the plastid. The protein localises to the chloroplast thylakoid membrane. Functionally, component of the cytochrome b6-f complex, which mediates electron transfer between photosystem II (PSII) and photosystem I (PSI), cyclic electron flow around PSI, and state transitions. The chain is Cytochrome f from Crucihimalaya wallichii (Rock-cress).